The sequence spans 422 residues: Cytochrome P450-pinF1, plant-inducible (422 aa).

A heme-binding site is contributed by Cys-369.

Belongs to the cytochrome P450 family. It depends on heme as a cofactor.

Not essential for virulence, but may be involved in the detoxification of plant protective agents at the site of wounding. The protein is Cytochrome P450-pinF1, plant-inducible (cyp103) of Rhizobium radiobacter (Agrobacterium tumefaciens).